The following is a 346-amino-acid chain: NADH-ubiquinone oxidoreductase chain 2 (346 aa).

10 helical membrane passes run 25–45, 52–72, 95–115, 124–144, 149–169, 178–198, 200–220, 242–262, 274–294, and 326–346; these read HWILAWTGLEINTLAIIPLIS, AIEATIKYFLTQSTASALILF, CLMLTMAIAIKLGLVPFHFWF, LITALLLSTLMKLPPITLLLL, LNTTLLTLLAISSTLIGGWMG, ILAFSSISHLGWMIMIISYNP, LTILTFILYTIMTSTVFLSLA, ATVMLTLLSLAGLPPLTGFMP, EMTPMATIITMLSLLSLFFYL, and AILTALSTTLLPLSPLIITML.

Belongs to the complex I subunit 2 family. Core subunit of respiratory chain NADH dehydrogenase (Complex I) which is composed of 45 different subunits.

The protein resides in the mitochondrion inner membrane. The enzyme catalyses a ubiquinone + NADH + 5 H(+)(in) = a ubiquinol + NAD(+) + 4 H(+)(out). Core subunit of the mitochondrial membrane respiratory chain NADH dehydrogenase (Complex I) which catalyzes electron transfer from NADH through the respiratory chain, using ubiquinone as an electron acceptor. Essential for the catalytic activity and assembly of complex I. The chain is NADH-ubiquinone oxidoreductase chain 2 (MT-ND2) from Gallus gallus (Chicken).